An 89-amino-acid chain; its full sequence is Small ribosomal subunit protein uS14 (89 aa).

Belongs to the universal ribosomal protein uS14 family. Part of the 30S ribosomal subunit. Contacts proteins S3 and S10.

Functionally, binds 16S rRNA, required for the assembly of 30S particles and may also be responsible for determining the conformation of the 16S rRNA at the A site. This chain is Small ribosomal subunit protein uS14, found in Chlorobium phaeovibrioides (strain DSM 265 / 1930) (Prosthecochloris vibrioformis (strain DSM 265)).